A 353-amino-acid chain; its full sequence is D-alanine--D-alanine ligase (353 aa).

The region spanning lysine 141 to isoleucine 349 is the ATP-grasp domain. Glutamate 176–glutamate 231 contributes to the ATP binding site. Aspartate 302, glutamate 316, and asparagine 318 together coordinate Mg(2+).

It belongs to the D-alanine--D-alanine ligase family. It depends on Mg(2+) as a cofactor. Requires Mn(2+) as cofactor.

It localises to the cytoplasm. The enzyme catalyses 2 D-alanine + ATP = D-alanyl-D-alanine + ADP + phosphate + H(+). It participates in cell wall biogenesis; peptidoglycan biosynthesis. Its function is as follows. Cell wall formation. This is D-alanine--D-alanine ligase from Prochlorococcus marinus (strain MIT 9313).